The following is an 800-amino-acid chain: Nuclear cap-binding protein subunit 1 (800 aa).

Residues 1–26 are disordered; that stretch reads MSRRRAHDTEDEGYDHRRNKRRRVSE. Threonine 9 carries the phosphothreonine modification. Positions 31–243 constitute an MIF4G domain; it reads EDRLESLILR…CLWAQIRKLR (213 aa). The segment at 669–704 is disordered; it reads LSKADSSSSESDEDAPTKRKKPITHADKPSEEAVER. The span at 692–704 shows a compositional bias: basic and acidic residues; that stretch reads THADKPSEEAVER.

The protein belongs to the NCBP1 family. In terms of assembly, component of the nuclear cap-binding complex (CBC), a heterodimer composed of Cbp80 and Cbp20 that interacts with m7GpppG-capped RNA.

It localises to the nucleus. Functionally, component of the cap-binding complex (CBC), which binds cotranscriptionally to the 5'-cap of pre-mRNAs and is involved in various processes such as pre-mRNA splicing and RNA-mediated gene silencing (RNAi). The CBC complex is involved in miRNA-mediated RNA interference via its interaction with Ars2 and is required for primary microRNAs (miRNAs) processing. Also involved in innate immunity via the short interfering RNAs (siRNAs) processing machinery by restricting the viral RNA production. In the CBC complex, Cbp80 does not bind directly capped RNAs (m7GpppG-capped RNA) but is required to stabilize the movement of the N-terminal loop of Cbp20 and lock the CBC into a high affinity cap-binding state with the cap structure. The protein is Nuclear cap-binding protein subunit 1 (Cbp80) of Drosophila persimilis (Fruit fly).